The sequence spans 199 residues: Prolactin-1 (199 aa).

3 disulfides stabilise this stretch: Cys-4–Cys-11, Cys-58–Cys-174, and Cys-191–Cys-199. Asn-60 is a glycosylation site (N-linked (GlcNAc...) asparagine).

Belongs to the somatotropin/prolactin family. Post-translationally, glycosylated.

Its subcellular location is the secreted. In Crocodylus novaeguineae (Crocodile), this protein is Prolactin-1.